Consider the following 376-residue polypeptide: Chaperone protein DnaJ (376 aa).

One can recognise a J domain in the interval 5-70; sequence DYYEVLGVAR…QKRAAYDQFG (66 aa). The CR-type zinc-finger motif lies at 134-212; sequence GTSVKIKVPT…CHGHGRVEET (79 aa). Zn(2+)-binding residues include cysteine 147, cysteine 150, cysteine 164, cysteine 167, cysteine 186, cysteine 189, cysteine 200, and cysteine 203. CXXCXGXG motif repeat units follow at residues 147–154, 164–171, 186–193, and 200–207; these read CTNCGGSG, CNTCGGHG, CPTCRGQG, and CNKCHGHG.

This sequence belongs to the DnaJ family. As to quaternary structure, homodimer. Zn(2+) is required as a cofactor.

It localises to the cytoplasm. Participates actively in the response to hyperosmotic and heat shock by preventing the aggregation of stress-denatured proteins and by disaggregating proteins, also in an autonomous, DnaK-independent fashion. Unfolded proteins bind initially to DnaJ; upon interaction with the DnaJ-bound protein, DnaK hydrolyzes its bound ATP, resulting in the formation of a stable complex. GrpE releases ADP from DnaK; ATP binding to DnaK triggers the release of the substrate protein, thus completing the reaction cycle. Several rounds of ATP-dependent interactions between DnaJ, DnaK and GrpE are required for fully efficient folding. Also involved, together with DnaK and GrpE, in the DNA replication of plasmids through activation of initiation proteins. This is Chaperone protein DnaJ from Teredinibacter turnerae (strain ATCC 39867 / T7901).